The primary structure comprises 684 residues: Putative glucan endo-1,3-beta-glucosidase btgC (684 aa).

Positions 1–10 are enriched in polar residues; it reads MAGVNRSFSY. Disordered regions lie at residues 1–38, 124–143, and 157–182; these read MAGVNRSFSYSRGDDALLRDDEREISPLRSAEDGLYST, AERDFNTTGSDNPYIPAPPD, and DSYSSHTGLGAGAPFAEHSTPGTTPS. Topologically, residues 1 to 302 are cytoplasmic; the sequence is MAGVNRSFSY…HIIGGGSRKR (302 aa). The span at 12-32 shows a compositional bias: basic and acidic residues; that stretch reads RGDDALLRDDEREISPLRSAE. The chain crosses the membrane as a helical; Signal-anchor for type II membrane protein span at residues 303–323; sequence GWIVGLILAAVIVAAIVGGAV. Topologically, residues 324–684 are extracellular; the sequence is GGILGHQEHD…IPDCGGKTIT (361 aa). The segment at 330–358 is disordered; it reads QEHDGDTSSSSSSSSSSGTGSGGSDKGDG. A compositionally biased stretch (low complexity) spans 336-347; it reads TSSSSSSSSSSG. 4 N-linked (GlcNAc...) asparagine glycosylation sites follow: asparagine 404, asparagine 427, asparagine 455, and asparagine 474. The Proton donor role is filled by glutamate 487. The Nucleophile role is filled by glutamate 586. N-linked (GlcNAc...) asparagine glycosylation occurs at asparagine 631.

It belongs to the glycosyl hydrolase 17 family.

Its subcellular location is the cell membrane. The catalysed reaction is Hydrolysis of (1-&gt;3)-beta-D-glucosidic linkages in (1-&gt;3)-beta-D-glucans.. Glucanases play a role in cell expansion during growth, in cell-cell fusion during mating, and in spore release during sporulation. This enzyme may be involved in beta-glucan degradation. Active on laminarin and lichenan. In Aspergillus niger (strain ATCC MYA-4892 / CBS 513.88 / FGSC A1513), this protein is Putative glucan endo-1,3-beta-glucosidase btgC (btgC).